Consider the following 144-residue polypeptide: Mediator of RNA polymerase II transcription subunit 10 (144 aa).

This sequence belongs to the Mediator complex subunit 10 family. As to quaternary structure, component of the Mediator complex.

Its subcellular location is the cytoplasm. The protein resides in the nucleus. The protein localises to the nucleus envelope. Its function is as follows. Component of the Mediator complex, a coactivator involved in the regulated transcription of nearly all RNA polymerase II-dependent genes. Mediator functions as a bridge to convey information from gene-specific regulatory proteins to the basal RNA polymerase II transcription machinery. Mediator is recruited to promoters by direct interactions with regulatory proteins and serves as a scaffold for the assembly of a functional preinitiation complex with RNA polymerase II and the general transcription factors. The sequence is that of Mediator of RNA polymerase II transcription subunit 10 (med10) from Schizosaccharomyces pombe (strain 972 / ATCC 24843) (Fission yeast).